The following is a 399-amino-acid chain: Yellow-related salivary protein M10 (399 aa).

The signal sequence occupies residues 1–18 (MKFILSVLALASFQHVFC). Residues Asn29 and Asn83 are each glycosylated (N-linked (GlcNAc...) asparagine).

The protein belongs to the major royal jelly protein family. As to expression, salivary gland (at protein level).

It localises to the secreted. Functionally, probably modulates blood feeding of sand flies on vertebrate species by binding and sequestering different mediators involved in the host response. Functions as a chemoattractant for host neutrophils; likely acts through a G-protein-coupled receptor and effect is dependent on calcium influx and phosphatidylinositol 3-kinases (PI3K) activity. In terms of biological role, (Microbial infection) Probably enhances infection caused by Leishmania species in the host through augmentation of host neutrophil recruitment into the skin. This Phlebotomus duboscqi (Sandfly) protein is Yellow-related salivary protein M10.